The primary structure comprises 314 residues: Trimethylamine N-oxide-binding protein (314 aa).

Positions 1–24 (MKKIVSLMSALVISVVSFAGISNA) are cleaved as a signal peptide. 5 residues coordinate trimethylamine N-oxide: W38, W85, E114, W164, and W212.

The complex is probably composed of two ATP-binding proteins (TmoW), two transmembrane proteins (TmoV) and a solute-binding protein (TmoX).

It is found in the periplasm. Its function is as follows. Part of the ABC transporter complex TmoXWV involved in trimethylamine N-oxide (TMAO) import. Possesses a high binding affinity toward TMAO, but presents little binding affinity toward betaine, carnitine, trimethylamine (TMA) or dimethylamine (DMA). The chain is Trimethylamine N-oxide-binding protein from Pelagibacter ubique (strain HTCC1062).